Here is a 427-residue protein sequence, read N- to C-terminus: 3-phosphoshikimate 1-carboxyvinyltransferase (427 aa).

The 3-phosphoshikimate site is built by Lys22, Ser23, and Arg27. A phosphoenolpyruvate-binding site is contributed by Lys22. Residues Gly96 and Arg124 each contribute to the phosphoenolpyruvate site. 7 residues coordinate 3-phosphoshikimate: Ser169, Ser170, Gln171, Ser197, Asp313, Asn336, and Lys340. Position 171 (Gln171) interacts with phosphoenolpyruvate. The active-site Proton acceptor is the Asp313. Phosphoenolpyruvate contacts are provided by Arg344, Arg386, and Lys411.

The protein belongs to the EPSP synthase family. As to quaternary structure, monomer.

The protein resides in the cytoplasm. It catalyses the reaction 3-phosphoshikimate + phosphoenolpyruvate = 5-O-(1-carboxyvinyl)-3-phosphoshikimate + phosphate. It participates in metabolic intermediate biosynthesis; chorismate biosynthesis; chorismate from D-erythrose 4-phosphate and phosphoenolpyruvate: step 6/7. In terms of biological role, catalyzes the transfer of the enolpyruvyl moiety of phosphoenolpyruvate (PEP) to the 5-hydroxyl of shikimate-3-phosphate (S3P) to produce enolpyruvyl shikimate-3-phosphate and inorganic phosphate. This Salmonella paratyphi A (strain ATCC 9150 / SARB42) protein is 3-phosphoshikimate 1-carboxyvinyltransferase.